Reading from the N-terminus, the 497-residue chain is SPI-2 type 3 secretion system secretin (497 aa).

Positions 1–20 (MVVNKRLILILLFILNTAKS) are cleaved as a signal peptide.

This sequence belongs to the bacterial secretin family. T3SS SctC subfamily. The core secretion machinery of the T3SS is composed of approximately 20 different proteins, including cytoplasmic components, a base, an export apparatus and a needle. This subunit is part of the base, which anchors the injectisome in the bacterial cell envelope. Forms a stable homooligomeric complex.

The protein resides in the cell outer membrane. Its function is as follows. Component of the type III secretion system (T3SS), also called injectisome, which is used to inject bacterial effector proteins into eukaryotic host cells. Forms a ring-shaped multimeric structure with an apparent central pore in the outer membrane. Required for secretion of some type III-secreted effectors including the SpvB exotoxin. The sequence is that of SPI-2 type 3 secretion system secretin from Salmonella typhimurium (strain 14028s / SGSC 2262).